Here is a 321-residue protein sequence, read N- to C-terminus: NADH-ubiquinone oxidoreductase chain 1 (321 aa).

Helical transmembrane passes span 7–27 (ITNS…LTLM), 73–93 (ILLI…WTPI), 104–124 (LGLL…LWAG), 148–168 (VTLG…TMQL), 175–195 (HTWL…STLA), 227–247 (FFLA…ILFI), 256–276 (ELFL…FLWI), and 297–317 (LPLT…ISGI).

Belongs to the complex I subunit 1 family.

The protein localises to the mitochondrion inner membrane. The catalysed reaction is a ubiquinone + NADH + 5 H(+)(in) = a ubiquinol + NAD(+) + 4 H(+)(out). Core subunit of the mitochondrial membrane respiratory chain NADH dehydrogenase (Complex I) that is believed to belong to the minimal assembly required for catalysis. Complex I functions in the transfer of electrons from NADH to the respiratory chain. The immediate electron acceptor for the enzyme is believed to be ubiquinone. This is NADH-ubiquinone oxidoreductase chain 1 (MT-ND1) from Varanus dumerilii (Dumeril's monitor).